The sequence spans 178 residues: Large ribosomal subunit protein uL6 (178 aa).

The protein belongs to the universal ribosomal protein uL6 family. In terms of assembly, part of the 50S ribosomal subunit.

In terms of biological role, this protein binds to the 23S rRNA, and is important in its secondary structure. It is located near the subunit interface in the base of the L7/L12 stalk, and near the tRNA binding site of the peptidyltransferase center. This is Large ribosomal subunit protein uL6 from Campylobacter jejuni subsp. jejuni serotype O:2 (strain ATCC 700819 / NCTC 11168).